The primary structure comprises 891 residues: Shieldin complex subunit 2 (891 aa).

The tract at residues methionine 1–glutamate 61 is sufficient for interaction with SHLD3 and MAD2L2. Residues methionine 1 to leucine 542 are interaction with ASTE1. 3 disordered regions span residues methionine 184–aspartate 222, asparagine 260–serine 294, and asparagine 333–lysine 357. Residues proline 192–aspartate 222 show a composition bias toward basic and acidic residues. Composition is skewed to polar residues over residues asparagine 260–valine 271 and leucine 342–tryptophan 354. The tract at residues lysine 695–cysteine 866 is mediates interaction with SHLD1.

This sequence belongs to the SHLD2 family. As to quaternary structure, component of the shieldin complex, consisting of SHLD1, SHLD2, SHLD3 and MAD2L2/REV7. Within the complex, SHLD2 forms a scaffold which interacts with a SHLD3-MAD2L2 subcomplex via its N-terminus, and with SHLD1 via its C-terminus. Interacts with TP53BP1. Interacts with RIF1. Interacts with ASTE1.

It localises to the chromosome. In terms of biological role, component of the shieldin complex, which plays an important role in repair of DNA double-stranded breaks (DSBs). During G1 and S phase of the cell cycle, the complex functions downstream of TP53BP1 to promote non-homologous end joining (NHEJ) and suppress DNA end resection. Mediates various NHEJ-dependent processes including immunoglobulin class-switch recombination, and fusion of unprotected telomeres. The protein is Shieldin complex subunit 2 of Mus musculus (Mouse).